Reading from the N-terminus, the 1347-residue chain is Protocadherin-11 X-linked (1347 aa).

Positions 1–23 (MDLLSGTYIFAVLLACVVFHSGA) are cleaved as a signal peptide. Over 24 to 812 (QEKNYTIREE…VSSPTSDYVK (789 aa)) the chain is Extracellular. 7 consecutive Cadherin domains span residues 26–139 (KNYT…APLF), 140–249 (PATV…HPVF), 250–355 (KETE…VPSI), 362–466 (NPVN…APVF), 467–570 (TQSF…SPVF), 571–673 (THNE…KPVF), and 677–795 (PSNC…APVT). 3 N-linked (GlcNAc...) asparagine glycosylation sites follow: asparagine 27, asparagine 48, and asparagine 54. N-linked (GlcNAc...) asparagine glycosylation occurs at asparagine 344. N-linked (GlcNAc...) asparagine glycosylation occurs at asparagine 553. An N-linked (GlcNAc...) asparagine glycan is attached at asparagine 773. The helical transmembrane segment at 813-833 (ILVAAVAGTITVVVVIFITAV) threads the bilayer. Residues 834–1347 (VRCRQAPHLK…DSPIMEEHPL (514 aa)) lie on the Cytoplasmic side of the membrane. Disordered stretches follow at residues 1057–1091 (LPEG…GYPQ), 1097–1116 (RATP…ESTF), and 1326–1347 (FTPR…EHPL).

Expressed strongly in fetal brain and brain (cortex, amygdala, thalamus, substantia nigra, hippocampus, caudate nucleus and corpus callosum). Expressed at low level in testis.

The protein resides in the cell membrane. Potential calcium-dependent cell-adhesion protein. The sequence is that of Protocadherin-11 X-linked (PCDH11X) from Homo sapiens (Human).